Here is a 345-residue protein sequence, read N- to C-terminus: Leucine zipper protein 2 (345 aa).

A signal peptide spans 1–19 (MKFNAAHYLLPLLPALVLS). A coiled-coil region spans residues 16–211 (LVLSTRQDYE…QMKAMKETVQ (196 aa)). N-linked (GlcNAc...) asparagine glycosylation is present at Asn133. The tract at residues 164-192 (LRYGKKDLLFKAQQLTELEQKLAVAKNEL) is leucine-zipper. The disordered stretch occupies residues 223 to 345 (PPLSLMPSNP…GTPAREEKLL (123 aa)). Positions 261 to 277 (GHHDSSQVQATKEESRR) are enriched in basic and acidic residues. Positions 298–313 (PQSNSTAESELTTQKL) are enriched in polar residues. N-linked (GlcNAc...) asparagine glycosylation occurs at Asn301.

As to expression, expression found only in the brain and spinal cord.

Its subcellular location is the secreted. The sequence is that of Leucine zipper protein 2 (Luzp2) from Mus musculus (Mouse).